Reading from the N-terminus, the 148-residue chain is Large ribosomal subunit protein bL9 (148 aa).

The protein belongs to the bacterial ribosomal protein bL9 family.

Functionally, binds to the 23S rRNA. This is Large ribosomal subunit protein bL9 from Oceanobacillus iheyensis (strain DSM 14371 / CIP 107618 / JCM 11309 / KCTC 3954 / HTE831).